A 454-amino-acid chain; its full sequence is tRNA-2-methylthio-N(6)-dimethylallyladenosine synthase (454 aa).

Residues 6–122 (RRYHITTYGC…LQDLLEQVAS (117 aa)) enclose the MTTase N-terminal domain. [4Fe-4S] cluster contacts are provided by C15, C51, C85, C157, C161, and C164. The 242-residue stretch at 143-384 (RDSAVTAWVN…GVCAELRSQR (242 aa)) folds into the Radical SAM core domain. In terms of domain architecture, TRAM spans 383–447 (QRYANRIEEV…SFSLTGEPLS (65 aa)).

This sequence belongs to the methylthiotransferase family. MiaB subfamily. In terms of assembly, monomer. Requires [4Fe-4S] cluster as cofactor.

The protein localises to the cytoplasm. It carries out the reaction N(6)-dimethylallyladenosine(37) in tRNA + (sulfur carrier)-SH + AH2 + 2 S-adenosyl-L-methionine = 2-methylsulfanyl-N(6)-dimethylallyladenosine(37) in tRNA + (sulfur carrier)-H + 5'-deoxyadenosine + L-methionine + A + S-adenosyl-L-homocysteine + 2 H(+). Functionally, catalyzes the methylthiolation of N6-(dimethylallyl)adenosine (i(6)A), leading to the formation of 2-methylthio-N6-(dimethylallyl)adenosine (ms(2)i(6)A) at position 37 in tRNAs that read codons beginning with uridine. The chain is tRNA-2-methylthio-N(6)-dimethylallyladenosine synthase from Acaryochloris marina (strain MBIC 11017).